The chain runs to 350 residues: Transmembrane protein 185A (350 aa).

The next 7 membrane-spanning stretches (helical) occupy residues 16 to 36 (LIYACLLLFSVLLALRLDGII), 41 to 61 (WAVFAPIWLWKLMVIVGASVG), 81 to 101 (FKAMLIAVGIHLLLLMFEVLV), 111 to 131 (FWLLVFMPLFFVSPVSVAACV), 177 to 197 (ILMSFLCLVVLYYIVWSVLFL), 211 to 231 (ITMALSWMTIVVPLLTFEILL), and 240 to 260 (AFSCIPIFVPLWLSLITLMAT). The interval 298–350 (DLHHEDNEETEETPVPEPPKIAPMFRKKARVVITQSPGKYVLPPPKLNIEMPD) is mediates interaction with MAP1B.

Belongs to the TMEM185 family. As to quaternary structure, interacts with MAP1B.

The protein localises to the cell projection. Its subcellular location is the dendrite. The protein resides in the membrane. The polypeptide is Transmembrane protein 185A (TMEM185A) (Homo sapiens (Human)).